We begin with the raw amino-acid sequence, 397 residues long: ATP-dependent RNA helicase eIF4A (397 aa).

The short motif at 23 to 51 (YKFDDLNLKPNIVRGIFGYGYETPSAIQQ) is the Q motif element. Positions 54–224 (ILPITEGRDV…TKFMNNPVRI (171 aa)) constitute a Helicase ATP-binding domain. Position 67 to 74 (67 to 74 (AQSGTGKT)) interacts with ATP. The short motif at 172 to 175 (DEAD) is the DEAD box element. The region spanning 235-396 (GIKQFYINVE…EMPADIGALF (162 aa)) is the Helicase C-terminal domain.

It belongs to the DEAD box helicase family. eIF4A subfamily. As to quaternary structure, component of the eIF4F complex, which composition varies with external and internal environmental conditions. It is composed of at least eIF4A, eIF4E and eIF4G.

The protein localises to the cytoplasm. The catalysed reaction is ATP + H2O = ADP + phosphate + H(+). Its function is as follows. ATP-dependent RNA helicase which is a subunit of the eIF4F complex involved in cap recognition and is required for mRNA binding to ribosome. In the current model of translation initiation, eIF4A unwinds RNA secondary structures in the 5'-UTR of mRNAs which is necessary to allow efficient binding of the small ribosomal subunit, and subsequent scanning for the initiator codon. The chain is ATP-dependent RNA helicase eIF4A (TIF1) from Candida albicans (strain SC5314 / ATCC MYA-2876) (Yeast).